Reading from the N-terminus, the 235-residue chain is Aspartate/glutamate leucyltransferase (235 aa).

The protein belongs to the R-transferase family. Bpt subfamily.

Its subcellular location is the cytoplasm. The enzyme catalyses N-terminal L-glutamyl-[protein] + L-leucyl-tRNA(Leu) = N-terminal L-leucyl-L-glutamyl-[protein] + tRNA(Leu) + H(+). The catalysed reaction is N-terminal L-aspartyl-[protein] + L-leucyl-tRNA(Leu) = N-terminal L-leucyl-L-aspartyl-[protein] + tRNA(Leu) + H(+). In terms of biological role, functions in the N-end rule pathway of protein degradation where it conjugates Leu from its aminoacyl-tRNA to the N-termini of proteins containing an N-terminal aspartate or glutamate. In Stutzerimonas stutzeri (strain A1501) (Pseudomonas stutzeri), this protein is Aspartate/glutamate leucyltransferase.